The chain runs to 523 residues: MAYRNTVCTPQVIDLETEQGHSHIHSESFNRTGNDSSDQGAQHAVRGVGNATNIGLSDMRSYYDAGMNHPHQPVHNLPPNLGVDSGFVFPSSMYNPCMSTTSMNQYVSHTQSFGLPSNQVVLGSMDEGSRNENAGESARGFIKRKNAAVAGSYHCANGFASSSSSHASLNPTHRPWDPSFESNVLPNTASYNPSEYHSQTSWPSMEGSSIPSNGFNLMGAHPESAQHGNYAFPTSHISQCFQPTSNTWISQSANGIADGIPQWEYVNGMNNAPGRFSRSGMTETVNGSFREYQNGPSTLCRGPLPYFHQHAGMHAHNLLDHTQVQAPYQQCHNNPVLHGVNHSGNRFHLGPRIPVLFSNSERTFGPPHHPLLANPVNHRNIRILPPEHATIMDFSRLYEVSNVVDEHRDMRLDIDSMTYEELLALEEQIGDVNTGLAKSYIVEKLKTSLFVPGSSCMSNKSSESSMENDACIICQEEYQVKECIGTLDCGHRYHEDCIKQWLMVKNLCPICKTTALSTGRRSG.

Positions 18–28 are enriched in basic and acidic residues; it reads EQGHSHIHSES. The segment at 18–43 is disordered; it reads EQGHSHIHSESFNRTGNDSSDQGAQH. Polar residues predominate over residues 29–40; the sequence is FNRTGNDSSDQG. The segment at 471–512 adopts an RING-type; atypical zinc-finger fold; that stretch reads CIICQEEYQVKECIGTLDCGHRYHEDCIKQWLMVKNLCPICK.

It belongs to the RING-type zinc finger family. In terms of assembly, interacts with DJA6.

The enzyme catalyses S-ubiquitinyl-[E2 ubiquitin-conjugating enzyme]-L-cysteine + [acceptor protein]-L-lysine = [E2 ubiquitin-conjugating enzyme]-L-cysteine + N(6)-ubiquitinyl-[acceptor protein]-L-lysine.. Its pathway is protein modification; protein ubiquitination. Probable E3 ubiquitin-protein ligase. The chain is Probable E3 ubiquitin-protein ligase ZFP1 from Oryza sativa subsp. japonica (Rice).